Consider the following 34-residue polypeptide: Corticostatin-6 (34 aa).

Cystine bridges form between C3/C31, C5/C20, and C10/C30.

Belongs to the alpha-defensin family. Lung, spleen, small intestine, pituitary gland, adrenal medulla and plasma.

The protein resides in the secreted. Microbicidal activity and inhibits corticotropin (ACTH) stimulated corticosterone production. This is Corticostatin-6 from Oryctolagus cuniculus (Rabbit).